A 103-amino-acid chain; its full sequence is uncharacterized protein (103 aa).

Disordered stretches follow at residues 1–20 (MIEL…WPKG) and 44–71 (LERM…HHLG). A signal peptide spans 1–34 (MIELSYAPDVAGRRSNWPKGSGVNTWTAIRWTFA).

This is an uncharacterized protein from Mycobacterium tuberculosis (strain CDC 1551 / Oshkosh).